We begin with the raw amino-acid sequence, 1466 residues long: Immediate-early protein 2 (1466 aa).

Disordered stretches follow at residues 1-21 (MEPAKPSGNNMGSNDERMQDY), 223-242 (NRGYDYNFRHHSYRPRGGNG), 339-370 (YNHPTKAQTIPETTKTKKHKATKDNETSRGNQ), 428-472 (RCRS…VTKA), 517-965 (RSKT…TSIN), 1005-1068 (FRPH…CRSN), 1086-1179 (SRTR…SENA), and 1191-1223 (TTSHLHQKQNVKLHNTKKCKKKRPRDDDSDSSI). Residues 339–350 (YNHPTKAQTIPE) are compositionally biased toward polar residues. The span at 428–437 (RCRSVQKKKE) shows a compositional bias: basic residues. Composition is skewed to basic and acidic residues over residues 443-472 (NKHDENHASSRSDLKERKSNEHEDKAVTKA) and 536-553 (PTKDNSYKKHHDSKDNYP). 2 stretches are compositionally biased toward polar residues: residues 583–595 (KNVSGKATSTSPK) and 640–665 (KNHTASADKNLTDNSPIRSNLNPTAF). Residues 666 to 681 (NKSNNNKSITNSTSNS) show a composition bias toward low complexity. Residues 696 to 713 (NESKDPNRTCGKNSDKHL) show a composition bias toward basic and acidic residues. Low complexity-rich tracts occupy residues 720–756 (ASKRAPSRASSRTSSRASSRASSRASSRASSRASSRA) and 763–772 (RASSRAPSRA). Residues 773–790 (SSRDSSRASSRDSSRDSN) show a composition bias toward basic and acidic residues. A compositionally biased stretch (low complexity) spans 791–800 (RASSKASSRA). Residues 801 to 814 (SSRDSSRASSRDSS) show a composition bias toward basic and acidic residues. Low complexity-rich tracts occupy residues 826–884 (SRAS…SSRA) and 926–940 (SRASSRASSRASSRA). Residues 955–965 (RQTPPHDTSIN) show a composition bias toward polar residues. An interaction with human UBE2I region spans residues 989-1037 (ARLQCFNHNDQFYNPRFRPHIRTNRKKSESTNDTDSESSMSRCKSHCRN). Low complexity-rich tracts occupy residues 1019–1029 (TNDTDSESSMS), 1053–1068 (GSSSISSSIEENCRSN), and 1086–1110 (SRTRSSSSSSSSSSASLSCSKSTLK). Residues 1116–1131 (QNRDNKQIKSKSDSKH) are compositionally biased toward basic and acidic residues. Residues 1162 to 1177 (HNSSPFNTHEQSNHSE) are compositionally biased toward polar residues. Residues 1195 to 1213 (LHQKQNVKLHNTKKCKKKR) show a composition bias toward basic residues.

This sequence belongs to the herpesviridae IE2 family. In terms of assembly, interacts with human UBE2I in the nucleus. Although this interaction does not promote IE2 sumoylation, it represses transactivation activity.

It is found in the host nucleus. Transcriptional transactivator. This chain is Immediate-early protein 2 (U90/U86), found in Homo sapiens (Human).